The chain runs to 484 residues: Protein nucleotidyltransferase YdiU (484 aa).

The ATP site is built by G81, G83, R84, K103, D115, G116, R166, and R173. D244 functions as the Proton acceptor in the catalytic mechanism. N245 and D254 together coordinate Mg(2+). D254 provides a ligand contact to ATP.

Belongs to the SELO family. It depends on Mg(2+) as a cofactor. Mn(2+) is required as a cofactor.

The enzyme catalyses L-seryl-[protein] + ATP = 3-O-(5'-adenylyl)-L-seryl-[protein] + diphosphate. It catalyses the reaction L-threonyl-[protein] + ATP = 3-O-(5'-adenylyl)-L-threonyl-[protein] + diphosphate. The catalysed reaction is L-tyrosyl-[protein] + ATP = O-(5'-adenylyl)-L-tyrosyl-[protein] + diphosphate. It carries out the reaction L-histidyl-[protein] + UTP = N(tele)-(5'-uridylyl)-L-histidyl-[protein] + diphosphate. The enzyme catalyses L-seryl-[protein] + UTP = O-(5'-uridylyl)-L-seryl-[protein] + diphosphate. It catalyses the reaction L-tyrosyl-[protein] + UTP = O-(5'-uridylyl)-L-tyrosyl-[protein] + diphosphate. Functionally, nucleotidyltransferase involved in the post-translational modification of proteins. It can catalyze the addition of adenosine monophosphate (AMP) or uridine monophosphate (UMP) to a protein, resulting in modifications known as AMPylation and UMPylation. The chain is Protein nucleotidyltransferase YdiU from Shewanella baltica (strain OS155 / ATCC BAA-1091).